The chain runs to 727 residues: Catalase-peroxidase (727 aa).

Residues 95–218 constitute a cross-link (tryptophyl-tyrosyl-methioninium (Trp-Tyr) (with M-244)); the sequence is WHSAGTYRII…LAAVQMGLIY (124 aa). His96 acts as the Proton acceptor in catalysis. The segment at residues 218-244 is a cross-link (tryptophyl-tyrosyl-methioninium (Tyr-Met) (with W-95)); the sequence is YVNPEGPNGEPDVLGAAKDIKESFGKM. Residue His259 coordinates heme b.

The protein belongs to the peroxidase family. Peroxidase/catalase subfamily. As to quaternary structure, homodimer or homotetramer. Heme b serves as cofactor. Formation of the three residue Trp-Tyr-Met cross-link is important for the catalase, but not the peroxidase activity of the enzyme.

It carries out the reaction H2O2 + AH2 = A + 2 H2O. It catalyses the reaction 2 H2O2 = O2 + 2 H2O. Its function is as follows. Bifunctional enzyme with both catalase and broad-spectrum peroxidase activity. This chain is Catalase-peroxidase, found in Persephonella marina (strain DSM 14350 / EX-H1).